The chain runs to 70 residues: Large ribosomal subunit protein bL31 (70 aa).

Positions 16, 18, 37, and 40 each coordinate Zn(2+).

The protein belongs to the bacterial ribosomal protein bL31 family. Type A subfamily. Part of the 50S ribosomal subunit. Requires Zn(2+) as cofactor.

In terms of biological role, binds the 23S rRNA. This is Large ribosomal subunit protein bL31 from Desulfovibrio desulfuricans (strain ATCC 27774 / DSM 6949 / MB).